The sequence spans 192 residues: Adenylate kinase (192 aa).

10–15 (GSGKGT) is an ATP binding site. Residues 30-59 (STGDMLREVISRETEVGRKAKAIINAGALV) form an NMP region. Residues threonine 31, arginine 36, 57–59 (ALV), 85–88 (GYPR), and glutamine 92 each bind AMP. The interval 126-142 (KRVQETIAVGGQVRSDD) is LID. An ATP-binding site is contributed by arginine 127. Residues arginine 139 and arginine 150 each contribute to the AMP site. Residue methionine 178 participates in ATP binding.

It belongs to the adenylate kinase family. As to quaternary structure, monomer.

It is found in the cytoplasm. The catalysed reaction is AMP + ATP = 2 ADP. The protein operates within purine metabolism; AMP biosynthesis via salvage pathway; AMP from ADP: step 1/1. Functionally, catalyzes the reversible transfer of the terminal phosphate group between ATP and AMP. Plays an important role in cellular energy homeostasis and in adenine nucleotide metabolism. The protein is Adenylate kinase of Bartonella quintana (strain Toulouse) (Rochalimaea quintana).